The primary structure comprises 187 residues: uncharacterized protein (187 aa).

The N-myristoyl glycine; by host moiety is linked to residue Gly2.

Belongs to the mimivirus L332/L333/L334 family.

This is an uncharacterized protein from Acanthamoeba polyphaga (Amoeba).